The chain runs to 442 residues: Tubulin beta chain (442 aa).

8 residues coordinate GTP: glutamine 11, glutamate 69, serine 138, glycine 142, threonine 143, glycine 144, asparagine 204, and asparagine 226. Glutamate 69 lines the Mg(2+) pocket.

The protein belongs to the tubulin family. As to quaternary structure, dimer of alpha and beta chains. A typical microtubule is a hollow water-filled tube with an outer diameter of 25 nm and an inner diameter of 15 nM. Alpha-beta heterodimers associate head-to-tail to form protofilaments running lengthwise along the microtubule wall with the beta-tubulin subunit facing the microtubule plus end conferring a structural polarity. Microtubules usually have 13 protofilaments but different protofilament numbers can be found in some organisms and specialized cells. Mg(2+) serves as cofactor.

It is found in the cytoplasm. The protein resides in the cytoskeleton. Functionally, tubulin is the major constituent of microtubules, a cylinder consisting of laterally associated linear protofilaments composed of alpha- and beta-tubulin heterodimers. Microtubules grow by the addition of GTP-tubulin dimers to the microtubule end, where a stabilizing cap forms. Below the cap, tubulin dimers are in GDP-bound state, owing to GTPase activity of alpha-tubulin. This Trypanosoma cruzi protein is Tubulin beta chain.